We begin with the raw amino-acid sequence, 972 residues long: Hyaluronan synthase (972 aa).

Residues 152-325 are A1; that stretch reads KPEHQHVGLS…VSLDWRLEQF (174 aa). An A2 region spans residues 432 to 604; that stretch reads EDSHINRVPL…IRAWHLTDGF (173 aa).

The protein belongs to the glycosyltransferase 2 family. CS/HAS subfamily. Mg(2+) serves as cofactor. Requires Co(2+) as cofactor.

The protein resides in the cell membrane. The catalysed reaction is [hyaluronan](n) + UDP-N-acetyl-alpha-D-glucosamine = N-acetyl-beta-D-glucosaminyl-(1-&gt;4)-[hyaluronan](n) + UDP + H(+). It carries out the reaction N-acetyl-beta-D-glucosaminyl-(1-&gt;4)-[hyaluronan](n) + UDP-alpha-D-glucuronate = [hyaluronan](n+1) + UDP + H(+). The enzyme catalyses 3-O-(beta-D-GalNAc-(1-&gt;4)-beta-D-GlcA-(1-&gt;3)-beta-D-Gal-(1-&gt;3)-beta-D-Gal-(1-&gt;4)-beta-D-Xyl)-L-seryl-[protein] + UDP-alpha-D-glucuronate = 3-O-(beta-D-GlcA-(1-&gt;3)-beta-D-GalNAc-(1-&gt;4)-beta-D-GlcA-(1-&gt;3)-beta-D-Gal-(1-&gt;3)-beta-D-Gal-(1-&gt;4)-beta-D-Xyl)-L-seryl-[protein] + UDP + H(+). It catalyses the reaction 3-O-{[beta-D-GalNAc-(1-&gt;4)-beta-D-GlcA-(1-&gt;3)](n)-beta-D-GalNAc-(1-&gt;4)-beta-D-GlcA-(1-&gt;3)-beta-D-Gal-(1-&gt;3)-beta-D-Gal-(1-&gt;4)-beta-D-Xyl}-L-seryl-[protein] + UDP-alpha-D-glucuronate = 3-O-{beta-D-GlcA-(1-&gt;3)-[beta-D-GalNAc-(1-&gt;4)-beta-D-GlcA-(1-&gt;3)](n)-beta-D-GalNAc-(1-&gt;4)-beta-D-GlcA-(1-&gt;3)-beta-D-Gal-(1-&gt;3)-beta-D-Gal-(1-&gt;4)-beta-D-Xyl}-L-seryl-[protein] + UDP + H(+). Its function is as follows. Catalyzes the polymerization of hyaluronan, a polysaccharide composed of a repeating disaccharide of N-acetylglucosamine (GlcNAc) and glucuronic acid (GlcUA) units. Each unit has the composition in beta-(1-&gt;4)-GlcUA-beta-(1-&gt;3)-GlcNAc. The protein is Hyaluronan synthase (hyaD) of Pasteurella multocida.